We begin with the raw amino-acid sequence, 256 residues long: Protein FixA (256 aa).

It belongs to the ETF beta-subunit/FixA family. Heterodimer of FixA and FixB.

The protein operates within amine and polyamine metabolism; carnitine metabolism. Functionally, required for anaerobic carnitine reduction. May bring reductant to CaiA. The protein is Protein FixA of Escherichia coli O139:H28 (strain E24377A / ETEC).